Reading from the N-terminus, the 417-residue chain is Mitochondrial tRNA-specific 2-thiouridylase 1 (417 aa).

ATP-binding positions include 32 to 39 and Met58; that span reads AMSSGVDS. The interaction with target base in tRNA stretch occupies residues 122–124; it reads NPD. Cys127 acts as the Nucleophile in catalysis. An intrachain disulfide couples Cys127 to Cys229. Gly154 serves as a coordination point for ATP. Residues 179-181 form an interaction with tRNA region; it reads KDQ. Cys229 acts as the Cysteine persulfide intermediate in catalysis. Residues 354–355 form an interaction with tRNA region; that stretch reads RS.

This sequence belongs to the MnmA/TRMU family.

Its subcellular location is the mitochondrion. It catalyses the reaction 5-taurinomethyluridine(34) in tRNA + S-sulfanyl-L-cysteinyl-[protein] + AH2 + ATP = 5-taurinomethyl-2-thiouridine(34) in tRNA + L-cysteinyl-[protein] + A + AMP + diphosphate + H(+). In terms of biological role, catalyzes the 2-thiolation of uridine at the wobble position (U34) of mitochondrial tRNA(Lys), tRNA(Glu) and tRNA(Gln). Required for the formation of 5-taurinomethyl-2-thiouridine (tm5s2U) of mitochondrial tRNA(Lys), tRNA(Glu), and tRNA(Gln) at the wobble position. ATP is required to activate the C2 atom of the wobble base. The sequence is that of Mitochondrial tRNA-specific 2-thiouridylase 1 (SLM3) from Saccharomyces cerevisiae (strain ATCC 204508 / S288c) (Baker's yeast).